The sequence spans 414 residues: L-cysteine:1D-myo-inositol 2-amino-2-deoxy-alpha-D-glucopyranoside ligase (414 aa).

Cys-43 contributes to the Zn(2+) binding site. L-cysteinyl-5'-AMP contacts are provided by residues 43-46 (CGIT), Thr-58, and 81-83 (NIT). The 'HIGH' region motif lies at 45–55 (ITPYDATHLGH). The 'ERGGDP' region motif lies at 189-194 (ERGGDP). Residue Trp-229 participates in L-cysteinyl-5'-AMP binding. Cys-233 is a Zn(2+) binding site. 251–253 (GSD) lines the L-cysteinyl-5'-AMP pocket. His-258 contributes to the Zn(2+) binding site. Position 285 (Ile-285) interacts with L-cysteinyl-5'-AMP. Residues 291–295 (KMSKS) carry the 'KMSKS' region motif.

Belongs to the class-I aminoacyl-tRNA synthetase family. MshC subfamily. Monomer. Zn(2+) is required as a cofactor.

The catalysed reaction is 1D-myo-inositol 2-amino-2-deoxy-alpha-D-glucopyranoside + L-cysteine + ATP = 1D-myo-inositol 2-(L-cysteinylamino)-2-deoxy-alpha-D-glucopyranoside + AMP + diphosphate + H(+). Functionally, catalyzes the ATP-dependent condensation of GlcN-Ins and L-cysteine to form L-Cys-GlcN-Ins. This chain is L-cysteine:1D-myo-inositol 2-amino-2-deoxy-alpha-D-glucopyranoside ligase (mshC), found in Mycobacterium bovis (strain ATCC BAA-935 / AF2122/97).